A 1555-amino-acid polypeptide reads, in one-letter code: Bromodomain adjacent to zinc finger domain protein 1A (1555 aa).

The required for association with the CHRAC1/POLE3 complex stretch occupies residues 1-128 (MPLLHRKPFV…EETVEVIRNN (128 aa)). The interval 1–128 (MPLLHRKPFV…EETVEVIRNN (128 aa)) is required for interaction with the CHRAC1-POLE3 heterodimer. Required for interaction with the CHRAC1-POLE3 heterodimer. The required for interaction with NCOR1 stretch occupies residues 1–133 (MPLLHRKPFV…VIRNNGTRLQ (133 aa)). One can recognise a WAC domain in the interval 22 to 128 (EEVFYCKVTN…EETVEVIRNN (107 aa)). A phosphoserine mark is found at Ser270 and Ser284. Residues 422–488 (PEVFGDALMV…LTAIFQAMAE (67 aa)) form the DDT domain. Residues 635 to 701 (IEDYVDVLRQ…EDEQRNSAAV (67 aa)) are a coiled coil. Composition is skewed to basic and acidic residues over residues 652 to 664 (LKAE…REAT) and 671 to 696 (RKEE…DEQR). Residues 652-751 (LKAEQHRKER…KRSRRGKVGQ (100 aa)) are disordered. The tract at residues 668 to 935 (IRRRKEEKLK…QEKSRICAQL (268 aa)) is interaction with SMARCA5. A required for interaction with SMARCA5 and formation of the CHRAC ISWI chromatin remodeling complex region spans residues 668–935 (IRRRKEEKLK…QEKSRICAQL (268 aa)). 2 stretches are compositionally biased toward acidic residues: residues 705-714 (GEEEREDFDT) and 728-737 (PDVVTEDEDD). At Thr732 the chain carries Phosphothreonine. A coiled-coil region spans residues 773–798 (SADAEEALRQEQQQKEKELLDKIQSA). Disordered stretches follow at residues 843 to 874 (PSSF…SSLD) and 944 to 969 (HFSD…CDIS). Low complexity predominate over residues 864–873 (SFLSESTSSL). Residue Lys954 forms a Glycyl lysine isopeptide (Lys-Gly) (interchain with G-Cter in SUMO2) linkage. 2 positions are modified to phosphoserine: Ser962 and Ser963. Residues 1149 to 1199 (NARCKICRKKGDAENMVLCDGCDRGHHTYCVRPKLKAVPDGDWFCPECRPK) form a PHD-type zinc finger. The interval 1203–1429 (RRLSSRQRPS…LNRRSSGRQG (227 aa)) is disordered. The segment covering 1214 to 1258 (ESDEEMEEGMEDDDDEVDDDDEEGQSEEEEYEVEQDEEDSDDDEA) has biased composition (acidic residues). Basic residues predominate over residues 1263 to 1277 (KRGRPQVRLPIKTKG). Position 1282 is a phosphoserine (Ser1282). A compositionally biased stretch (polar residues) spans 1297–1313 (SRSQQSTPKNTAKSASK). Ser1320, Ser1339, Ser1352, Ser1370, Ser1401, Ser1412, and Ser1416 each carry phosphoserine. A compositionally biased stretch (polar residues) spans 1369-1386 (HSPSFTNFRVSTSRSSRQ). A Bromo domain is found at 1429–1532 (GGVHELSAFE…AFFHIQAQKL (104 aa)). Thr1546 is subject to Phosphothreonine.

This sequence belongs to the WAL family. Component of the ACF-1 ISWI chromatin remodeling complex at least composed of SMARCA1 and BAZ1A, which regulates the spacing of histone octamers on the DNA template to facilitate access to DNA. Within the ACF-1 ISWI chromatin remodeling complex interacts with SMARCA1; the interaction is direct. Component of the ACF-5 ISWI chromatin remodeling complex (also called the ACF complex) at least composed of BAZ1A and SMARCA5/SNF2H, which regulates the spacing of histone octamers on the DNA template to facilitate access to DNA. Within the ACF-5 ISWI chromatin remodeling complex interacts with SMARCA5/SNF2H; the interaction is direct. Component of the CHRAC ISWI chromatin remodeling complex at least composed of SMARCA5/SNF2H, BAZ1A/ACF1, CHRAC1 and POLE3; the complex preferentially binds DNA through the CHRAC1-POLE3 heterodimer and possesses ATP-dependent nucleosome-remodeling activity. Within the complex interacts (via N-terminus) with POLE3-CHRAC1 heterodimer; the interaction is direct and is required for the complex to preferentially bind to DNA. Within the complex interacts with SMARCA5/SNF2H; the interaction is direct and promotes the interaction with the POLE3-CHRAC1 heterodimer. Interacts with NCOR1 (via its RD1 domain); the interaction corepresses a number of NCOR1-regulated genes.

The protein localises to the nucleus. Regulatory subunit of the ATP-dependent ACF-1 and ACF-5 ISWI chromatin remodeling complexes, which form ordered nucleosome arrays on chromatin and slide edge- and center-positioned histone octamers away from their original location on the DNA template to facilitate access to DNA during DNA-templated processes such as DNA replication, transcription, and repair. Both complexes regulate the spacing of nucleosomes along the chromatin and have the ability to slide mononucleosomes to the center of a DNA template in an ATP-dependent manner. The ACF-1 ISWI chromatin remodeling complex has a lower ATP hydrolysis rate than the ACF-5 ISWI chromatin remodeling complex. Has a role in sensing the length of DNA which flank nucleosomes, which modulates the nucleosome spacing activity of the ACF-5 ISWI chromatin remodeling complex. Involved in DNA replication and together with SMARCA5/SNF2H is required for replication of pericentric heterochromatin in S-phase. May have a role in nuclear receptor-mediated transcription repression. The polypeptide is Bromodomain adjacent to zinc finger domain protein 1A (Baz1a) (Mus musculus (Mouse)).